Here is a 286-residue protein sequence, read N- to C-terminus: Nucleotide-binding protein Tgr7_0722 (286 aa).

G8 to S15 lines the ATP pocket. A GTP-binding site is contributed by D60 to S63.

Belongs to the RapZ-like family.

Displays ATPase and GTPase activities. In Thioalkalivibrio sulfidiphilus (strain HL-EbGR7), this protein is Nucleotide-binding protein Tgr7_0722.